The sequence spans 274 residues: Kit ligand (274 aa).

Residues 1–25 form the signal peptide; sequence MKKTQTWIVTCIYLQLLLFNPLVKT. Residues 26-215 are Extracellular-facing; the sequence is KGLCRNRVTD…TNPIEDSSIQ (190 aa). Intrachain disulfides connect Cys-29-Cys-114 and Cys-68-Cys-164. N-linked (GlcNAc...) asparagine glycans are attached at residues Asn-90, Asn-97, Asn-145, and Asn-196. The chain crosses the membrane as a helical span at residues 216-238; that stretch reads WAVMALPACFSLVIGFAFGAFYW. Residues 239–274 are Cytoplasmic-facing; the sequence is KKKQPNLTRTVENIQINEEDNEISMLQEKEREFQEV.

Belongs to the SCF family. As to quaternary structure, homodimer, non-covalently linked. Post-translationally, a soluble form is produced by proteolytic processing of isoform 1 in the extracellular domain.

It localises to the cell membrane. Its subcellular location is the secreted. The protein localises to the cytoplasm. It is found in the cytoskeleton. The protein resides in the cell projection. It localises to the lamellipodium. Its subcellular location is the filopodium. Stimulates the proliferation of mast cells. Able to augment the proliferation of both myeloid and lymphoid hematopoietic progenitors in bone marrow culture. Also mediates cell-cell adhesion. Acts synergistically with other cytokines, probably interleukins. This Felis catus (Cat) protein is Kit ligand (KITLG).